A 455-amino-acid polypeptide reads, in one-letter code: Asparagine--tRNA ligase (455 aa).

Belongs to the class-II aminoacyl-tRNA synthetase family. As to quaternary structure, homodimer.

Its subcellular location is the cytoplasm. It catalyses the reaction tRNA(Asn) + L-asparagine + ATP = L-asparaginyl-tRNA(Asn) + AMP + diphosphate + H(+). This is Asparagine--tRNA ligase from Lawsonia intracellularis (strain PHE/MN1-00).